A 205-amino-acid polypeptide reads, in one-letter code: NAD(P)H dehydrogenase (quinone) (205 aa).

A Flavodoxin-like domain is found at 3 to 194; the sequence is VLVVYYSMYG…AAARYQGKHV (192 aa). Residues 9–14 and 82–84 each bind FMN; these read SMYGHI and TRF. Residue Y11 coordinates NAD(+). Substrate is bound at residue W102. H138 is a binding site for FMN.

It belongs to the WrbA family. Requires FMN as cofactor.

It catalyses the reaction a quinone + NADH + H(+) = a quinol + NAD(+). The enzyme catalyses a quinone + NADPH + H(+) = a quinol + NADP(+). The protein is NAD(P)H dehydrogenase (quinone) of Geotalea daltonii (strain DSM 22248 / JCM 15807 / FRC-32) (Geobacter daltonii).